Reading from the N-terminus, the 288-residue chain is Phosphatidylserine decarboxylase proenzyme (288 aa).

Active-site charge relay system; for autoendoproteolytic cleavage activity residues include Asp90, His147, and Ser252. The Schiff-base intermediate with substrate; via pyruvic acid; for decarboxylase activity role is filled by Ser252. Position 252 is a pyruvic acid (Ser); by autocatalysis (Ser252).

The protein belongs to the phosphatidylserine decarboxylase family. PSD-B subfamily. Prokaryotic type I sub-subfamily. As to quaternary structure, heterodimer of a large membrane-associated beta subunit and a small pyruvoyl-containing alpha subunit. Pyruvate serves as cofactor. In terms of processing, is synthesized initially as an inactive proenzyme. Formation of the active enzyme involves a self-maturation process in which the active site pyruvoyl group is generated from an internal serine residue via an autocatalytic post-translational modification. Two non-identical subunits are generated from the proenzyme in this reaction, and the pyruvate is formed at the N-terminus of the alpha chain, which is derived from the carboxyl end of the proenzyme. The autoendoproteolytic cleavage occurs by a canonical serine protease mechanism, in which the side chain hydroxyl group of the serine supplies its oxygen atom to form the C-terminus of the beta chain, while the remainder of the serine residue undergoes an oxidative deamination to produce ammonia and the pyruvoyl prosthetic group on the alpha chain. During this reaction, the Ser that is part of the protease active site of the proenzyme becomes the pyruvoyl prosthetic group, which constitutes an essential element of the active site of the mature decarboxylase.

Its subcellular location is the cell membrane. The enzyme catalyses a 1,2-diacyl-sn-glycero-3-phospho-L-serine + H(+) = a 1,2-diacyl-sn-glycero-3-phosphoethanolamine + CO2. The protein operates within phospholipid metabolism; phosphatidylethanolamine biosynthesis; phosphatidylethanolamine from CDP-diacylglycerol: step 2/2. Catalyzes the formation of phosphatidylethanolamine (PtdEtn) from phosphatidylserine (PtdSer). In Pseudomonas fluorescens (strain ATCC BAA-477 / NRRL B-23932 / Pf-5), this protein is Phosphatidylserine decarboxylase proenzyme.